The chain runs to 269 residues: Glutamate racemase (269 aa).

Substrate-binding positions include 7–8 (DS) and 39–40 (YG). Catalysis depends on C70, which acts as the Proton donor/acceptor. 71–72 (NT) is a substrate binding site. C194 functions as the Proton donor/acceptor in the catalytic mechanism. Residue 195-196 (TH) coordinates substrate.

Belongs to the aspartate/glutamate racemases family.

It catalyses the reaction L-glutamate = D-glutamate. It functions in the pathway cell wall biogenesis; peptidoglycan biosynthesis. Its function is as follows. Provides the (R)-glutamate required for cell wall biosynthesis. This Ruegeria sp. (strain TM1040) (Silicibacter sp.) protein is Glutamate racemase.